Reading from the N-terminus, the 444-residue chain is Trigger factor (444 aa).

In terms of domain architecture, PPIase FKBP-type spans 165 to 250 (GDFAKFDFEG…LHEIQELKIP (86 aa)).

Belongs to the FKBP-type PPIase family. Tig subfamily.

It localises to the cytoplasm. The enzyme catalyses [protein]-peptidylproline (omega=180) = [protein]-peptidylproline (omega=0). Involved in protein export. Acts as a chaperone by maintaining the newly synthesized protein in an open conformation. Functions as a peptidyl-prolyl cis-trans isomerase. In Campylobacter jejuni subsp. jejuni serotype O:23/36 (strain 81-176), this protein is Trigger factor.